We begin with the raw amino-acid sequence, 318 residues long: Transaldolase (318 aa).

Lys-132 acts as the Schiff-base intermediate with substrate in catalysis.

Belongs to the transaldolase family. Type 1 subfamily. As to quaternary structure, homodimer.

It localises to the cytoplasm. It catalyses the reaction D-sedoheptulose 7-phosphate + D-glyceraldehyde 3-phosphate = D-erythrose 4-phosphate + beta-D-fructose 6-phosphate. It participates in carbohydrate degradation; pentose phosphate pathway; D-glyceraldehyde 3-phosphate and beta-D-fructose 6-phosphate from D-ribose 5-phosphate and D-xylulose 5-phosphate (non-oxidative stage): step 2/3. Its function is as follows. Transaldolase is important for the balance of metabolites in the pentose-phosphate pathway. This chain is Transaldolase, found in Shewanella baltica (strain OS185).